The following is a 551-amino-acid chain: Trehalose-6-phosphate hydrolase (551 aa).

Residue Asp-200 is the Nucleophile of the active site. Residue Glu-251 is the Proton donor of the active site.

Belongs to the glycosyl hydrolase 13 family.

The protein resides in the cytoplasm. It catalyses the reaction alpha,alpha-trehalose 6-phosphate + H2O = D-glucose 6-phosphate + D-glucose. In terms of biological role, hydrolyzes trehalose-6-phosphate to glucose and glucose 6-phosphate. Can also very effectively hydrolyze p-nitrophenyl-alpha-D-glucopyranoside, but it does not recognize trehalose, sucrose, maltose, isomaltose, or maltodextrins. This Escherichia coli (strain K12) protein is Trehalose-6-phosphate hydrolase (treC).